The chain runs to 1097 residues: DNA-directed RNA polymerase subunit beta (1097 aa).

This sequence belongs to the RNA polymerase beta chain family. In plastids the minimal PEP RNA polymerase catalytic core is composed of four subunits: alpha, beta, beta', and beta''. When a (nuclear-encoded) sigma factor is associated with the core the holoenzyme is formed, which can initiate transcription.

The protein localises to the plastid. The protein resides in the chloroplast. It carries out the reaction RNA(n) + a ribonucleoside 5'-triphosphate = RNA(n+1) + diphosphate. In terms of biological role, DNA-dependent RNA polymerase catalyzes the transcription of DNA into RNA using the four ribonucleoside triphosphates as substrates. The protein is DNA-directed RNA polymerase subunit beta of Rhodomonas salina (Cryptomonas salina).